An 895-amino-acid chain; its full sequence is Protein translocase subunit SecA (895 aa).

Residues Gln-90, 108–112 (GEGKS), and Asp-498 each bind ATP.

It belongs to the SecA family.

The protein resides in the plastid. The protein localises to the chloroplast stroma. It localises to the chloroplast thylakoid membrane. The catalysed reaction is ATP + H2O + cellular proteinSide 1 = ADP + phosphate + cellular proteinSide 2.. Has a central role in coupling the hydrolysis of ATP to the transfer of proteins across the thylakoid membrane. The chain is Protein translocase subunit SecA from Cyanidium caldarium (Red alga).